A 169-amino-acid polypeptide reads, in one-letter code: Ribosome maturation factor RimP (169 aa).

The protein belongs to the RimP family.

It is found in the cytoplasm. Required for maturation of 30S ribosomal subunits. The sequence is that of Ribosome maturation factor RimP from Pseudomonas putida (strain W619).